The sequence spans 78 residues: Acyl carrier protein (78 aa).

Positions 2 to 77 (STIEERVKKI…EAIDYVTAHA (76 aa)) constitute a Carrier domain. At Ser-37 the chain carries O-(pantetheine 4'-phosphoryl)serine.

It belongs to the acyl carrier protein (ACP) family. In terms of processing, 4'-phosphopantetheine is transferred from CoA to a specific serine of apo-ACP by AcpS. This modification is essential for activity because fatty acids are bound in thioester linkage to the sulfhydryl of the prosthetic group.

The protein localises to the cytoplasm. It participates in lipid metabolism; fatty acid biosynthesis. In terms of biological role, carrier of the growing fatty acid chain in fatty acid biosynthesis. This is Acyl carrier protein from Ectopseudomonas mendocina (strain ymp) (Pseudomonas mendocina).